The sequence spans 867 residues: Nuclear body protein SP140 (867 aa).

One can recognise an HSR domain in the interval 22–138 (VAEIQNVEGQ…IYRSFQNVCY (117 aa)). Disordered stretches follow at residues 260–341 (TYST…EEPQ), 365–432 (TPQV…SEEL), and 486–580 (IANN…KHKD). The span at 268-301 (KQGEEEGRNSPRKRNQDKEKYQESPEGRDKETFD) shows a compositional bias: basic and acidic residues. Composition is skewed to acidic residues over residues 323-341 (EGEE…EEPQ) and 384-397 (EGEE…EMCD). Positions 404–416 (ASSSLARRGSVSS) are enriched in low complexity. Composition is skewed to basic residues over residues 494–512 (KPKR…RMRM) and 567–577 (QKRVRSRASRK). The Nuclear localization signal signature appears at 495–514 (PKRKRRKKRGHGWSRMRMRR). The region spanning 580–661 (DETVDFKAPL…RWLMENGFLP (82 aa)) is the SAND domain. Residues 690–736 (LDECEVCRDGGELFCCDTCSRVFHEDCHIPPVEAERTPWNCIFCRMK) form a PHD-type zinc finger. Position 726 is a phosphothreonine (Thr726). The 104-residue stretch at 754 to 857 (QMCPEEQLKC…AEFEKNFKEV (104 aa)) folds into the Bromo domain.

Interacts with PIN1. Phosphorylation at Thr-726 promotes binding of PIN1 and subsequent isomerization of Pro-727. As to expression, high levels in spleen and peripheral blood leukocytes, much lower levels in tonsils, thymus, prostate, ovary, small intestine, and colon. Very low levels in heart, brain, placenta, lung, liver, skeletal muscle, kidney, and pancreas. Not detected in brain, liver and muscle.

It is found in the nucleus. Its subcellular location is the PML body. The protein localises to the cytoplasm. Component of the nuclear body, also known as nuclear domain 10, PML oncogenic domain, and KR body. May be involved in the pathogenesis of acute promyelocytic leukemia and viral infection. May play a role in chromatin-mediated regulation of gene expression although it does not bind to histone H3 tails. The sequence is that of Nuclear body protein SP140 from Homo sapiens (Human).